Reading from the N-terminus, the 187-residue chain is Elongation factor P (187 aa).

Belongs to the elongation factor P family.

The protein resides in the cytoplasm. The protein operates within protein biosynthesis; polypeptide chain elongation. In terms of biological role, involved in peptide bond synthesis. Stimulates efficient translation and peptide-bond synthesis on native or reconstituted 70S ribosomes in vitro. Probably functions indirectly by altering the affinity of the ribosome for aminoacyl-tRNA, thus increasing their reactivity as acceptors for peptidyl transferase. The protein is Elongation factor P of Granulibacter bethesdensis (strain ATCC BAA-1260 / CGDNIH1).